A 259-amino-acid polypeptide reads, in one-letter code: Ribosomal RNA small subunit methyltransferase A (259 aa).

Residues Asn-13, Leu-15, Gly-40, Glu-61, Asp-85, and Asn-103 each contribute to the S-adenosyl-L-methionine site.

It belongs to the class I-like SAM-binding methyltransferase superfamily. rRNA adenine N(6)-methyltransferase family. RsmA subfamily.

The protein localises to the cytoplasm. The enzyme catalyses adenosine(1518)/adenosine(1519) in 16S rRNA + 4 S-adenosyl-L-methionine = N(6)-dimethyladenosine(1518)/N(6)-dimethyladenosine(1519) in 16S rRNA + 4 S-adenosyl-L-homocysteine + 4 H(+). Functionally, specifically dimethylates two adjacent adenosines (A1518 and A1519) in the loop of a conserved hairpin near the 3'-end of 16S rRNA in the 30S particle. May play a critical role in biogenesis of 30S subunits. The protein is Ribosomal RNA small subunit methyltransferase A of Neisseria meningitidis serogroup C / serotype 2a (strain ATCC 700532 / DSM 15464 / FAM18).